Consider the following 114-residue polypeptide: Non-specific lipid-transfer protein 1 (114 aa).

Positions 1-23 are cleaved as a signal peptide; that stretch reads MEMVSKIACFVLLCMVVVAPHAE. Cystine bridges form between C27–C73, C37–C50, C51–C96, and C71–C110.

It belongs to the plant LTP family.

In terms of biological role, plant non-specific lipid-transfer proteins transfer phospholipids as well as galactolipids across membranes. May play a role in wax or cutin deposition in the cell walls of expanding epidermal cells and certain secretory tissues. This is Non-specific lipid-transfer protein 1 (LTP1) from Solanum pennellii (Tomato).